The primary structure comprises 212 residues: MAEITASLVKQLRERTGAGMMECKSALVEAKGDLTEGEVVLRKRGIASAGKKASRATKQGLIGTYIHHGGQLGVMVEVNCESDFVARTDDFQELVHDIAMHIAAADPKFIRKEDVTEDVIEKEKDIHKARALAEGKPEKMLDKITEGRMSKFYEEICLLEQPFVKEATLTVGQLVKTKIAKLGENISVARFVRFKVGDAQGSDSGSETPAAE.

The involved in Mg(2+) ion dislocation from EF-Tu stretch occupies residues 82–85; it reads SDFV.

It belongs to the EF-Ts family.

Its subcellular location is the cytoplasm. Its function is as follows. Associates with the EF-Tu.GDP complex and induces the exchange of GDP to GTP. It remains bound to the aminoacyl-tRNA.EF-Tu.GTP complex up to the GTP hydrolysis stage on the ribosome. This Solibacter usitatus (strain Ellin6076) protein is Elongation factor Ts.